We begin with the raw amino-acid sequence, 378 residues long: AT-hook motif nuclear-localized protein 5 (378 aa).

Disordered regions lie at residues 30-70 (QVAS…AEHR), 88-160 (VQPT…GRKQ), and 302-378 (NNNK…LTRG). A compositionally biased stretch (basic residues) spans 104–113 (VKKKRGRPRK). The short motif at 105-113 (KKKRGRPRK) is the Bipartite nuclear localization signal element. DNA-binding regions (a.T hook) lie at residues 105 to 117 (KKKR…YVPD) and 147 to 159 (KRAR…TGRK). Residues 171–314 (TSAGLAFAPH…KTIKQEIKPK (144 aa)) enclose the PPC domain. Polar residues-rich tracts occupy residues 316–327 (EPTNSEMETTPG) and 335–345 (STGQHTPQNFP).

As to quaternary structure, interacts with AHL29.

It localises to the nucleus. In terms of biological role, transcription factor that specifically binds AT-rich DNA sequences related to the nuclear matrix attachment regions (MARs). The protein is AT-hook motif nuclear-localized protein 5 of Arabidopsis thaliana (Mouse-ear cress).